Consider the following 171-residue polypeptide: NADH-quinone oxidoreductase subunit I 1 (171 aa).

4Fe-4S ferredoxin-type domains are found at residues 41-71 (LSRDPDGEERCVACYLCAAACPVDCIALQAT) and 81-110 (EFFRINFSRCIFCGFCEEACPTDAIQLTPD). Residues cysteine 51, cysteine 54, cysteine 57, cysteine 61, cysteine 90, cysteine 93, cysteine 96, and cysteine 100 each coordinate [4Fe-4S] cluster.

The protein belongs to the complex I 23 kDa subunit family. As to quaternary structure, NDH-1 is composed of 14 different subunits. Subunits NuoA, H, J, K, L, M, N constitute the membrane sector of the complex. It depends on [4Fe-4S] cluster as a cofactor.

The protein localises to the cell inner membrane. It catalyses the reaction a quinone + NADH + 5 H(+)(in) = a quinol + NAD(+) + 4 H(+)(out). Functionally, NDH-1 shuttles electrons from NADH, via FMN and iron-sulfur (Fe-S) centers, to quinones in the respiratory chain. The immediate electron acceptor for the enzyme in this species is believed to be ubiquinone. Couples the redox reaction to proton translocation (for every two electrons transferred, four hydrogen ions are translocated across the cytoplasmic membrane), and thus conserves the redox energy in a proton gradient. The chain is NADH-quinone oxidoreductase subunit I 1 from Nitrosospira multiformis (strain ATCC 25196 / NCIMB 11849 / C 71).